Consider the following 702-residue polypeptide: Putative endo-beta-N-acetylglucosaminidase (702 aa).

A signal peptide spans methionine 1–alanine 23. Cell wall-binding repeat units follow at residues alanine 42–tyrosine 63, glutamate 65–methionine 84, lysine 86–methionine 105, isoleucine 124–histidine 145, glutamate 147–leucine 166, glutamine 185–tyrosine 206, aspartate 208–methionine 227, alanine 229–isoleucine 248, glutamate 250–methionine 271, alanine 273–methionine 292, glutamate 294–methionine 315, alanine 317–isoleucine 336, glutamate 338–methionine 359, alanine 361–methionine 380, and glutamate 382–methionine 403.

This sequence belongs to the glycosyl hydrolase 73 family.

It localises to the secreted. The catalysed reaction is an N(4)-(oligosaccharide-(1-&gt;3)-[oligosaccharide-(1-&gt;6)]-beta-D-Man-(1-&gt;4)-beta-D-GlcNAc-(1-&gt;4)-alpha-D-GlcNAc)-L-asparaginyl-[protein] + H2O = an oligosaccharide-(1-&gt;3)-[oligosaccharide-(1-&gt;6)]-beta-D-Man-(1-&gt;4)-D-GlcNAc + N(4)-(N-acetyl-beta-D-glucosaminyl)-L-asparaginyl-[protein]. In terms of biological role, plays an important role in cell wall degradation and cell separation. The chain is Putative endo-beta-N-acetylglucosaminidase (lytB) from Streptococcus pneumoniae (strain ATCC BAA-255 / R6).